A 25-amino-acid polypeptide reads, in one-letter code: Large ribosomal subunit protein uL30 (25 aa).

Belongs to the universal ribosomal protein uL30 family. As to quaternary structure, part of the 50S ribosomal subunit.

This Pseudomonas putida (Arthrobacter siderocapsulatus) protein is Large ribosomal subunit protein uL30 (rpmD).